A 440-amino-acid polypeptide reads, in one-letter code: Probable exopolygalacturonase C (440 aa).

The N-terminal stretch at 1-21 (MLITNPALLGILASLVPLALG) is a signal peptide. N-linked (GlcNAc...) asparagine glycans are attached at residues N84 and N151. PbH1 repeat units lie at residues 188-210 (GDDI…PFNT), 217-238 (GTNI…AVNT), and 240-261 (SHNI…SIGS). An N-linked (GlcNAc...) asparagine glycan is attached at N219. The active-site Proton donor is D231. H255 is an active-site residue. The N-linked (GlcNAc...) asparagine glycan is linked to N271. The stretch at 272-293 (ITNLRFEDVTVIDALYAARFKS) is one PbH1 4 repeat. Residue N313 is glycosylated (N-linked (GlcNAc...) asparagine). Cysteines 389 and 395 form a disulfide. N434 carries N-linked (GlcNAc...) asparagine glycosylation.

Belongs to the glycosyl hydrolase 28 family.

Its subcellular location is the secreted. The catalysed reaction is [(1-&gt;4)-alpha-D-galacturonosyl](n) + H2O = alpha-D-galacturonate + [(1-&gt;4)-alpha-D-galacturonosyl](n-1). Its function is as follows. Specific in hydrolyzing the terminal glycosidic bond of polygalacturonic acid and oligogalacturonates. In Aspergillus fumigatus (strain ATCC MYA-4609 / CBS 101355 / FGSC A1100 / Af293) (Neosartorya fumigata), this protein is Probable exopolygalacturonase C (pgxC).